The sequence spans 193 residues: MIGRIAGILLEKNPPHLLVDCNGVGYEIDVPMSTFYNLPQTGERVVLLTQQIVREDAHLLYGFLTPQERTTFRELLKITGIGARMALAVLSGMSVQELAQAVTMQDAARLTRLPGIGKKTAERLLLELKGKLGADLGALAGAASQSDHAADILNALVALGYSEKEGLAAIKNVPAGTGVSEGIKLALKALSKV.

The segment at Met-1–Leu-64 is domain I. Residues Thr-65–Leu-139 form a domain II region. The interval Leu-139–Ala-143 is flexible linker. A domain III region spans residues Ser-144–Val-193.

Belongs to the RuvA family. In terms of assembly, homotetramer. Forms an RuvA(8)-RuvB(12)-Holliday junction (HJ) complex. HJ DNA is sandwiched between 2 RuvA tetramers; dsDNA enters through RuvA and exits via RuvB. An RuvB hexamer assembles on each DNA strand where it exits the tetramer. Each RuvB hexamer is contacted by two RuvA subunits (via domain III) on 2 adjacent RuvB subunits; this complex drives branch migration. In the full resolvosome a probable DNA-RuvA(4)-RuvB(12)-RuvC(2) complex forms which resolves the HJ.

It localises to the cytoplasm. Its function is as follows. The RuvA-RuvB-RuvC complex processes Holliday junction (HJ) DNA during genetic recombination and DNA repair, while the RuvA-RuvB complex plays an important role in the rescue of blocked DNA replication forks via replication fork reversal (RFR). RuvA specifically binds to HJ cruciform DNA, conferring on it an open structure. The RuvB hexamer acts as an ATP-dependent pump, pulling dsDNA into and through the RuvAB complex. HJ branch migration allows RuvC to scan DNA until it finds its consensus sequence, where it cleaves and resolves the cruciform DNA. This Burkholderia ambifaria (strain ATCC BAA-244 / DSM 16087 / CCUG 44356 / LMG 19182 / AMMD) (Burkholderia cepacia (strain AMMD)) protein is Holliday junction branch migration complex subunit RuvA.